A 105-amino-acid chain; its full sequence is ATP-dependent Clp protease adapter protein ClpS (105 aa).

This sequence belongs to the ClpS family. In terms of assembly, binds to the N-terminal domain of the chaperone ClpA.

In terms of biological role, involved in the modulation of the specificity of the ClpAP-mediated ATP-dependent protein degradation. The polypeptide is ATP-dependent Clp protease adapter protein ClpS (Streptomyces avermitilis (strain ATCC 31267 / DSM 46492 / JCM 5070 / NBRC 14893 / NCIMB 12804 / NRRL 8165 / MA-4680)).